We begin with the raw amino-acid sequence, 734 residues long: Ribosomal RNA large subunit methyltransferase K/L (734 aa).

Positions 49 to 167 constitute a THUMP domain; that stretch reads QAYRVCMWSR…KTEHTYCLDL (119 aa).

It belongs to the methyltransferase superfamily. RlmKL family.

It localises to the cytoplasm. It catalyses the reaction guanosine(2445) in 23S rRNA + S-adenosyl-L-methionine = N(2)-methylguanosine(2445) in 23S rRNA + S-adenosyl-L-homocysteine + H(+). It carries out the reaction guanosine(2069) in 23S rRNA + S-adenosyl-L-methionine = N(2)-methylguanosine(2069) in 23S rRNA + S-adenosyl-L-homocysteine + H(+). Functionally, specifically methylates the guanine in position 2445 (m2G2445) and the guanine in position 2069 (m7G2069) of 23S rRNA. In Acinetobacter baylyi (strain ATCC 33305 / BD413 / ADP1), this protein is Ribosomal RNA large subunit methyltransferase K/L.